Here is a 209-residue protein sequence, read N- to C-terminus: Octanoyltransferase (209 aa).

The 180-residue stretch at 30 to 209 folds into the BPL/LPL catalytic domain; the sequence is DHEPEIIYLV…IQTEFNKIFK (180 aa). Substrate is bound by residues 69–76, 143–145, and 156–158; these read RGGKFTFH, AIG, and GVA. The active-site Acyl-thioester intermediate is the C174.

Belongs to the LipB family.

It localises to the cytoplasm. The enzyme catalyses octanoyl-[ACP] + L-lysyl-[protein] = N(6)-octanoyl-L-lysyl-[protein] + holo-[ACP] + H(+). It participates in protein modification; protein lipoylation via endogenous pathway; protein N(6)-(lipoyl)lysine from octanoyl-[acyl-carrier-protein]: step 1/2. In terms of biological role, catalyzes the transfer of endogenously produced octanoic acid from octanoyl-acyl-carrier-protein onto the lipoyl domains of lipoate-dependent enzymes. Lipoyl-ACP can also act as a substrate although octanoyl-ACP is likely to be the physiological substrate. This is Octanoyltransferase from Rickettsia rickettsii (strain Iowa).